Reading from the N-terminus, the 226-residue chain is Cysteine and histidine-rich domain-containing protein RAR1 (226 aa).

Zn(2+) contacts are provided by Cys-12, Cys-17, Cys-31, His-34, Cys-49, Cys-50, Cys-66, and His-71. Positions 12–71 (CQRIGCNAMFTDDDNPQGSCQFHASGPFFHDGMKEWSCCKQRSHDFSLFLEIPGCKTGKH) constitute a CHORD 1 domain. Positions 104-124 (CSRCRQGFFCSDHGSQPKEQI) match the CCCH motif. Zn(2+)-binding residues include Cys-159, Cys-164, Cys-178, His-181, Cys-196, Cys-197, Cys-213, and His-218. One can recognise a CHORD 2 domain in the interval 159 to 218 (CKNKGCGQTFKERDNHETACSHHPGPAVFHDRLRGWKCCDVHVKEFDEFMEIPPCTKGWH).

In terms of assembly, interacts with HSP90-1, HSP90-2, SGT1A and SGT1B. Forms a ternary complex with SGT1A and barley HSP90.

Required specifically for plant innate immunity. Is essential for resistance conferred by multiple R genes recognizing different bacterial and oomycete pathogen isolates like avirulent P.syringae or H.parasitica (downy mildew). Contributes additively with SGT1B to RPP5-dependent resistance. Functions as a positive regulator of RPS5 accumulation by assisting its stabilization. May function as co-chaperone of HSP90-2 to positively regulate the steady-state accumulation of RPM1 and protect it from SGT1-mediated degradation. Acts as a negative regulator of pathogen-associated molecular pattern (PAMP)-triggered immunity. This Arabidopsis thaliana (Mouse-ear cress) protein is Cysteine and histidine-rich domain-containing protein RAR1 (RAR1).